A 460-amino-acid chain; its full sequence is A-type ATP synthase subunit B (460 aa).

This sequence belongs to the ATPase alpha/beta chains family. As to quaternary structure, has multiple subunits with at least A(3), B(3), C, D, E, F, H, I and proteolipid K(x).

The protein localises to the cell membrane. Functionally, component of the A-type ATP synthase that produces ATP from ADP in the presence of a proton gradient across the membrane. The B chain is a regulatory subunit. This chain is A-type ATP synthase subunit B, found in Thermofilum pendens (strain DSM 2475 / Hrk 5).